The chain runs to 208 residues: Cytidylate kinase (208 aa).

Glycine 7 to threonine 15 lines the ATP pocket.

It belongs to the cytidylate kinase family. Type 1 subfamily.

It is found in the cytoplasm. The catalysed reaction is CMP + ATP = CDP + ADP. The enzyme catalyses dCMP + ATP = dCDP + ADP. This is Cytidylate kinase from Xanthobacter autotrophicus (strain ATCC BAA-1158 / Py2).